Consider the following 60-residue polypeptide: DNA-directed RNA polymerase subunit Rpo6 (60 aa).

This sequence belongs to the archaeal Rpo6/eukaryotic RPB6 RNA polymerase subunit family. As to quaternary structure, part of the RNA polymerase complex.

Its subcellular location is the cytoplasm. It carries out the reaction RNA(n) + a ribonucleoside 5'-triphosphate = RNA(n+1) + diphosphate. DNA-dependent RNA polymerase (RNAP) catalyzes the transcription of DNA into RNA using the four ribonucleoside triphosphates as substrates. The polypeptide is DNA-directed RNA polymerase subunit Rpo6 (Methanothrix thermoacetophila (strain DSM 6194 / JCM 14653 / NBRC 101360 / PT) (Methanosaeta thermophila)).